Consider the following 750-residue polypeptide: uncharacterized protein (750 aa).

Helical transmembrane passes span 2 to 22 (FVLL…TNVI), 33 to 53 (SLIL…DIFI), 79 to 99 (LLVL…VVSL), 116 to 136 (LSIF…TIML), and 143 to 163 (IQSL…SPIA). Disordered stretches follow at residues 385-461 (DNKG…KKKE) and 571-651 (NKEF…PLTA). Basic and acidic residues predominate over residues 398 to 411 (ENTKGDDNSSEKTD). Positions 412-424 (TVSVSTKLKTTAD) are enriched in polar residues. The segment covering 425 to 436 (QSESTQMSSEST) has biased composition (low complexity). Positions 437–451 (ATGISSDPQSQGKMN) are enriched in polar residues. Residues 452–461 (NKSEEQKKKE) show a composition bias toward basic and acidic residues. A compositionally biased stretch (polar residues) spans 618–629 (DSKGNTATNSDT). The helical transmembrane segment at 724–744 (ATIVITLFLTVVLLAIAFFFF) threads the bilayer.

To M.pneumoniae MPN_335.

It localises to the cell membrane. This is an uncharacterized protein from Mycoplasma pneumoniae (strain ATCC 29342 / M129 / Subtype 1) (Mycoplasmoides pneumoniae).